Consider the following 659-residue polypeptide: 3-hydroxypropionyl-coenzyme A synthetase (659 aa).

The active site involves Asp-525. An N6-acetyllysine modification is found at Lys-616.

The protein belongs to the ATP-dependent AMP-binding enzyme family.

It carries out the reaction 3-hydroxypropanoate + ATP + CoA = 3-hydroxypropanoyl-CoA + AMP + diphosphate. Its function is as follows. Plays a role in the autotrophic CO(2) fixation pathway. Activates 3-hydroxypropionate to its CoA ester. Can also activate propionate, and to a lesser extent acrylate, acetate and butyrate. The chain is 3-hydroxypropionyl-coenzyme A synthetase from Sulfurisphaera tokodaii (strain DSM 16993 / JCM 10545 / NBRC 100140 / 7) (Sulfolobus tokodaii).